The following is a 154-amino-acid chain: 6,7-dimethyl-8-ribityllumazine synthase (154 aa).

5-amino-6-(D-ribitylamino)uracil is bound by residues F26, 60–62 (ALE), and 84–86 (CII). 89-90 (ET) is a binding site for (2S)-2-hydroxy-3-oxobutyl phosphate. H92 acts as the Proton donor in catalysis. N117 lines the 5-amino-6-(D-ribitylamino)uracil pocket. R131 contacts (2S)-2-hydroxy-3-oxobutyl phosphate.

The protein belongs to the DMRL synthase family.

The catalysed reaction is (2S)-2-hydroxy-3-oxobutyl phosphate + 5-amino-6-(D-ribitylamino)uracil = 6,7-dimethyl-8-(1-D-ribityl)lumazine + phosphate + 2 H2O + H(+). Its pathway is cofactor biosynthesis; riboflavin biosynthesis; riboflavin from 2-hydroxy-3-oxobutyl phosphate and 5-amino-6-(D-ribitylamino)uracil: step 1/2. Functionally, catalyzes the formation of 6,7-dimethyl-8-ribityllumazine by condensation of 5-amino-6-(D-ribitylamino)uracil with 3,4-dihydroxy-2-butanone 4-phosphate. This is the penultimate step in the biosynthesis of riboflavin. The polypeptide is 6,7-dimethyl-8-ribityllumazine synthase (Polaromonas sp. (strain JS666 / ATCC BAA-500)).